We begin with the raw amino-acid sequence, 459 residues long: Glycosyl hydrolase family 109 protein (459 aa).

Positions 1 to 45 (MAGDESRSNPFSRRTLLRTSAAAGAGLGVAGLSTGYGAAQPVRPA) form a signal peptide, tat-type signal. Residues 70-71 (NR), D92, 141-144 (WEWH), 161-162 (EC), and N190 each bind NAD(+). Substrate-binding positions include Y219, R238, 250–253 (YPTH), and Y332. An NAD(+)-binding site is contributed by Y250. A disordered region spans residues 440–459 (DFTRGRWQTPHPGVDSPKPA).

It belongs to the Gfo/Idh/MocA family. Glycosyl hydrolase 109 subfamily. NAD(+) is required as a cofactor. Post-translationally, predicted to be exported by the Tat system. The position of the signal peptide cleavage has not been experimentally proven.

Its function is as follows. Glycosidase. The sequence is that of Glycosyl hydrolase family 109 protein from Saccharopolyspora erythraea (strain ATCC 11635 / DSM 40517 / JCM 4748 / NBRC 13426 / NCIMB 8594 / NRRL 2338).